Consider the following 213-residue polypeptide: Nucleolar protein 12 (213 aa).

Positions 33–96 (GFHKRKVERK…RLVTAKTESV (64 aa)) form a coiled coil. Residues 118–213 (ARLLGLTPPE…LTGKARHSGE (96 aa)) are disordered. 2 stretches are compositionally biased toward basic residues: residues 170–182 (AHSR…KHPR) and 198–213 (KAQR…HSGE).

This sequence belongs to the RRP17 family. As to quaternary structure, interacts with KIAA1191.

It localises to the nucleus. It is found in the nucleolus. Its subcellular location is the cytoplasm. In terms of biological role, multifunctional RNA binding protein that plays a role in RNA metabolism and DNA maintenance. Participates in the resolution of DNA stress and the maintenance of genome integrity by localizing to sites of DNA insults. Also plays a role in proper nucleolar organization by limiting nucleolar size and regulating nucleolar number. Mechanistically, regulates the nucleolar levels of fibrillarin and nucleolin, two key players in pre-rRNA processing and ribosome assembly. In Homo sapiens (Human), this protein is Nucleolar protein 12 (NOL12).